Reading from the N-terminus, the 393-residue chain is Riboflavin biosynthesis protein RibBA (393 aa).

The interval 1–200 (MQFDNIDSAL…IDDLIEYRKK (200 aa)) is DHBP synthase. D-ribulose 5-phosphate is bound by residues 27–28 (RE), Asp32, 139–143 (RNGHT), and Glu163. Glu28 serves as a coordination point for Mg(2+). His142 contacts Mg(2+). Residues 201-393 (LEPEIEFKAK…TKKIKMGHLI (193 aa)) are GTP cyclohydrolase II. 249 to 253 (RLHSA) is a GTP binding site. Positions 254, 265, and 267 each coordinate Zn(2+). GTP is bound by residues Gln270, 291-293 (EGR), and Thr313. Catalysis depends on Asp325, which acts as the Proton acceptor; for GTP cyclohydrolase activity. The active-site Nucleophile; for GTP cyclohydrolase activity is Arg327. GTP-binding residues include Ser348 and Lys353.

It in the N-terminal section; belongs to the DHBP synthase family. The protein in the C-terminal section; belongs to the GTP cyclohydrolase II family. Requires Mg(2+) as cofactor. Mn(2+) serves as cofactor. It depends on Zn(2+) as a cofactor.

The catalysed reaction is D-ribulose 5-phosphate = (2S)-2-hydroxy-3-oxobutyl phosphate + formate + H(+). It catalyses the reaction GTP + 4 H2O = 2,5-diamino-6-hydroxy-4-(5-phosphoribosylamino)-pyrimidine + formate + 2 phosphate + 3 H(+). Its pathway is cofactor biosynthesis; riboflavin biosynthesis; 2-hydroxy-3-oxobutyl phosphate from D-ribulose 5-phosphate: step 1/1. It participates in cofactor biosynthesis; riboflavin biosynthesis; 5-amino-6-(D-ribitylamino)uracil from GTP: step 1/4. Its function is as follows. Catalyzes the conversion of D-ribulose 5-phosphate to formate and 3,4-dihydroxy-2-butanone 4-phosphate. Catalyzes the conversion of GTP to 2,5-diamino-6-ribosylamino-4(3H)-pyrimidinone 5'-phosphate (DARP), formate and pyrophosphate. This Staphylococcus aureus (strain MSSA476) protein is Riboflavin biosynthesis protein RibBA.